A 304-amino-acid chain; its full sequence is MNRLAVEIPGLSLKNPIMPASGCFGFGQEYSKYYDLNELGAIMAKAVTPEPRLGNPTPRVAETASGMLNAIGLQNPGLEHVLAHELPFLEQFETPIIANVAGATEDDYVQVCARIGESKAVKAIELNISCPNVKHGGIAFGTDPDVAHRLTKAVKNVATVPVYVKLSPNVADIVSIAQAIEAAGADGLTMINTLLGMRIDLKTRKPIIANGTGGLSGPAIKPVAIRMIHQVREVSNIPIIGMGGVQTVDDVLEFLIAGADAVAVGTMNFTDPFICPKLISELPKRMDELGISSLQELKKERANQ.

Residues serine 21 and 45–46 (KA) each bind FMN. Residues lysine 45 and 69–73 (NAIGL) each bind substrate. FMN contacts are provided by asparagine 99 and asparagine 127. A substrate-binding site is contributed by asparagine 127. The Nucleophile role is filled by cysteine 130. Residues lysine 165 and isoleucine 191 each coordinate FMN. Position 192–193 (192–193 (NT)) interacts with substrate. FMN is bound by residues glycine 217, 243 to 244 (GG), and 265 to 266 (GT).

Belongs to the dihydroorotate dehydrogenase family. Type 1 subfamily. In terms of assembly, heterotetramer of 2 PyrK and 2 PyrD type B subunits. FMN is required as a cofactor.

The protein resides in the cytoplasm. It catalyses the reaction (S)-dihydroorotate + NAD(+) = orotate + NADH + H(+). It functions in the pathway pyrimidine metabolism; UMP biosynthesis via de novo pathway; orotate from (S)-dihydroorotate (NAD(+) route): step 1/1. Functionally, catalyzes the conversion of dihydroorotate to orotate with NAD(+) as electron acceptor. In Listeria monocytogenes serotype 4b (strain F2365), this protein is Dihydroorotate dehydrogenase B (NAD(+)), catalytic subunit (pyrD).